The following is a 614-amino-acid chain: Putative Na(+)/H(+) antiporter YjbQ (614 aa).

13 helical membrane-spanning segments follow: residues 3-23 (HTSV…PILL), 32-52 (VVVA…NLVV), 57-77 (WLQT…GLEI), 107-127 (IFVG…LAGF), 130-150 (NAFL…VPTL), 163-183 (IILL…AVFS), 193-213 (MWLL…GRVF), 225-244 (GTIQ…LVAL), 248-267 (LGAE…SLLS), 282-302 (GFLI…WTLF), 307-327 (ILIM…IPVM), 338-358 (IFAS…AATI), and 368-388 (NMSG…PICF). In terms of domain architecture, RCK N-terminal spans 401–519 (KKTITFIGAN…EQGISIFSIL (119 aa)). The RCK C-terminal domain occupies 533–614 (PGVMKLLTNQ…VTDLKKTLEG (82 aa)).

Belongs to the monovalent cation:proton antiporter 2 (CPA2) transporter (TC 2.A.37) family.

The protein localises to the cell membrane. Binds cyclic di-AMP (c-di-AMP), which may regulate the transporter activity. Its function is as follows. Probable Na(+)/H(+) antiporter. The chain is Putative Na(+)/H(+) antiporter YjbQ from Bacillus subtilis (strain 168).